The following is a 95-amino-acid chain: Large ribosomal subunit protein uL23 (95 aa).

It belongs to the universal ribosomal protein uL23 family. Part of the 50S ribosomal subunit. Contacts protein L29, and trigger factor when it is bound to the ribosome.

Functionally, one of the early assembly proteins it binds 23S rRNA. One of the proteins that surrounds the polypeptide exit tunnel on the outside of the ribosome. Forms the main docking site for trigger factor binding to the ribosome. This chain is Large ribosomal subunit protein uL23, found in Desulforamulus reducens (strain ATCC BAA-1160 / DSM 100696 / MI-1) (Desulfotomaculum reducens).